The chain runs to 410 residues: Acetate kinase (410 aa).

A Mg(2+)-binding site is contributed by N7. Residue K14 participates in ATP binding. R88 lines the substrate pocket. D145 functions as the Proton donor/acceptor in the catalytic mechanism. ATP contacts are provided by residues 203–207 (HAGNG), 278–280 (DTR), and 326–330 (GIGEN). E379 contacts Mg(2+).

Belongs to the acetokinase family. In terms of assembly, homodimer. Mg(2+) is required as a cofactor. The cofactor is Mn(2+).

Its subcellular location is the cytoplasm. It carries out the reaction acetate + ATP = acetyl phosphate + ADP. It functions in the pathway metabolic intermediate biosynthesis; acetyl-CoA biosynthesis; acetyl-CoA from acetate: step 1/2. Catalyzes the formation of acetyl phosphate from acetate and ATP. Can also catalyze the reverse reaction. This is Acetate kinase from Onion yellows phytoplasma (strain OY-M).